A 580-amino-acid chain; its full sequence is Xylulose kinase (580 aa).

Residues histidine 99, arginine 170, aspartate 280, and asparagine 281 each coordinate substrate. ATP is bound by residues tryptophan 355, 441–442 (GA), and asparagine 445.

The protein belongs to the FGGY kinase family. As to quaternary structure, monomer.

The catalysed reaction is D-xylulose + ATP = D-xylulose 5-phosphate + ADP + H(+). Its function is as follows. Phosphorylates D-xylulose to produce D-xylulose 5-phosphate, a molecule that may play an important role in the regulation of glucose metabolism and lipogenesis. The polypeptide is Xylulose kinase (XYLB) (Pongo abelii (Sumatran orangutan)).